Here is a 338-residue protein sequence, read N- to C-terminus: Biotin synthase (338 aa).

The 226-residue stretch at 59–284 (EEVEIEGIVS…RTTLRFAGGR (226 aa)) folds into the Radical SAM core domain. The [4Fe-4S] cluster site is built by Cys-74, Cys-78, and Cys-81. Positions 117, 209, and 279 each coordinate [2Fe-2S] cluster.

The protein belongs to the radical SAM superfamily. Biotin synthase family. As to quaternary structure, homodimer. The cofactor is [4Fe-4S] cluster. It depends on [2Fe-2S] cluster as a cofactor.

It carries out the reaction (4R,5S)-dethiobiotin + (sulfur carrier)-SH + 2 reduced [2Fe-2S]-[ferredoxin] + 2 S-adenosyl-L-methionine = (sulfur carrier)-H + biotin + 2 5'-deoxyadenosine + 2 L-methionine + 2 oxidized [2Fe-2S]-[ferredoxin]. It functions in the pathway cofactor biosynthesis; biotin biosynthesis; biotin from 7,8-diaminononanoate: step 2/2. Functionally, catalyzes the conversion of dethiobiotin (DTB) to biotin by the insertion of a sulfur atom into dethiobiotin via a radical-based mechanism. The polypeptide is Biotin synthase (Corynebacterium urealyticum (strain ATCC 43042 / DSM 7109)).